The primary structure comprises 101 residues: Small ribosomal subunit protein uS14 (101 aa).

This sequence belongs to the universal ribosomal protein uS14 family. In terms of assembly, part of the 30S ribosomal subunit. Contacts proteins S3 and S10.

Binds 16S rRNA, required for the assembly of 30S particles and may also be responsible for determining the conformation of the 16S rRNA at the A site. This Haemophilus ducreyi (strain 35000HP / ATCC 700724) protein is Small ribosomal subunit protein uS14.